The primary structure comprises 397 residues: Multidrug resistance protein MdtH (397 aa).

Transmembrane regions (helical) follow at residues 11–31, 32–52, 71–91, 94–114, 137–157, 163–183, 211–231, 242–262, 291–311, 340–360, and 366–386; these read WFLA…MPMI, SLRF…ALGL, FGAR…FASL, AQSG…GCLF, LLMM…SWLL, YVCL…LLIL, LVLI…IFPI, AVGW…YPLA, FANT…GIVI, LALG…YAML, and LPWL…VNCF.

The protein belongs to the major facilitator superfamily. DHA1 family. MdtH (TC 2.A.1.2.21) subfamily.

It localises to the cell inner membrane. The sequence is that of Multidrug resistance protein MdtH from Aeromonas hydrophila subsp. hydrophila (strain ATCC 7966 / DSM 30187 / BCRC 13018 / CCUG 14551 / JCM 1027 / KCTC 2358 / NCIMB 9240 / NCTC 8049).